Reading from the N-terminus, the 227-residue chain is NDR1/HIN1-like protein 10 (227 aa).

Residues V42–I62 traverse the membrane as a helical segment. N-linked (GlcNAc...) asparagine glycosylation is found at N138 and N210.

As to expression, expressed in senescing leaves.

It localises to the cell membrane. Functionally, may play a role in plant immunity. The protein is NDR1/HIN1-like protein 10 of Arabidopsis thaliana (Mouse-ear cress).